We begin with the raw amino-acid sequence, 1182 residues long: Retrotransposable element SLACS 132 kDa protein (1182 aa).

Disordered regions lie at residues 77–97 (GERS…PRER), 163–220 (DVLD…STDQ), 317–339 (RRKR…ALRL), and 418–478 (RTAR…STAP). Acidic residues predominate over residues 163 to 174 (DVLDEEEQDDDL). Basic and acidic residues predominate over residues 420–446 (ARREQQQQRGKDNQEEEDRQKKEEKSL). Over residues 456-475 (SVRQGGQPSSSQPKRLNRWS) the composition is skewed to polar residues. The Reverse transcriptase domain maps to 560–790 (NADVSMEVGR…TGDTGFGTAV (231 aa)).

The catalysed reaction is DNA(n) + a 2'-deoxyribonucleoside 5'-triphosphate = DNA(n+1) + diphosphate. The sequence is that of Retrotransposable element SLACS 132 kDa protein from Trypanosoma brucei gambiense.